Here is a 378-residue protein sequence, read N- to C-terminus: Alginate lyase (378 aa).

A signal peptide spans 1–28 (MQTPKLIRPTLLSMAILSSMAWATGASA). Residues 67–68 (SK), 140–141 (HT), and Tyr-258 each bind substrate.

This sequence belongs to the polysaccharide lyase 5 family.

Its subcellular location is the periplasm. It catalyses the reaction Eliminative cleavage of alginate to give oligosaccharides with 4-deoxy-alpha-L-erythro-hex-4-enuronosyl groups at their non-reducing ends and beta-D-mannuronate at their reducing end.. The monovalent cation sodium enhances activity but is not absolutely required. Functionally, catalyzes the depolymerization of alginate by cleaving the beta-1,4 glycosidic bond between two adjacent sugar residues via a beta-elimination mechanism. Degrades deacetylated polymannuronate (polyM) alginate from P.aeruginosa more efficiently than non-deacetylated polyM and alginate from M.pyrifera. AlgL from P.syringae also degrades its own alginate, which may indicate a role in cleaving preformed alginate and/or in determining the length of the alginate polymer. May serve to degrade mislocalized alginate that is trapped in the periplasmic space. The sequence is that of Alginate lyase from Pseudomonas syringae pv. syringae.